We begin with the raw amino-acid sequence, 148 residues long: Lipoprotein signal peptidase (148 aa).

The next 2 membrane-spanning stretches (helical) occupy residues 57–77 and 80–100; these read QWIFIIVALLATVFGLYYLNT and VHIFGRLGIILIISGALGNLI. Residues Asp-110 and Asp-126 contribute to the active site. Residues 124 to 144 form a helical membrane-spanning segment; that stretch reads IADVFVVVGTVFLCIYVLFFE.

This sequence belongs to the peptidase A8 family.

The protein resides in the cell membrane. It catalyses the reaction Release of signal peptides from bacterial membrane prolipoproteins. Hydrolyzes -Xaa-Yaa-Zaa-|-(S,diacylglyceryl)Cys-, in which Xaa is hydrophobic (preferably Leu), and Yaa (Ala or Ser) and Zaa (Gly or Ala) have small, neutral side chains.. It functions in the pathway protein modification; lipoprotein biosynthesis (signal peptide cleavage). This protein specifically catalyzes the removal of signal peptides from prolipoproteins. This is Lipoprotein signal peptidase from Clostridioides difficile (strain 630) (Peptoclostridium difficile).